The following is a 733-amino-acid chain: MFKTHKVEIEWAGRPLTIETGRVARQADGAVVATYGETVVLATVVSAKAPKPDQDFFPLTVNYQEKTYAVGKIPGGYFKRESRPSENETLISRLIDRPIRPLFVDDYKNDTQVIVSVIQHDLENNPDILSMIAASAALTLSGIPFMGPIAGARVGYCNGHYVLNPTLDEMPESKLDLVVAGTENAVLMVESEAHELSEEVMLGAITFGQKGFQPVIDAIIQLAEVAAKEPREFIPEDFSDLEKTMLKMIEKDLRKAYTITDKQQRYDAIDAIKTEILSKFAPEMEVNCELTADKIATVFKRLQAKIVRWNILDTGKRIDGRDLSTVRPIQSEVGILPRTHGSALFTRGETQALVVATLGTSEDEQYVDLLTGVCKETFLLHYNFPPFSVGETGRLSSPGRREIGHGKLAWRAIHPMLPTKEAFPYTIRVVSEITESNGSSSMATVCGTSLALMDAGVPLARPVAGIAMGLIKEGERFVILSDILGDEDHLGDMDFKVAGTKNGITSLQMDIKIDGITEDIMKIALEQAKDGRNHILNEMAKALTDARTELSEFSPRIEMMTIPVEKIREVIGSGGKVIREIVEQTGAKINIEDDGTIKIASPDTKSIETAKSWIHSIVDEPEVGTIYQGTVVKTTEFGAFINFFGSHDGLVHISQLASKRVAKTTDVVKEGDKVWVQLMGFDERGKIRLSMKVVDQQTGKEIPQDDLIKTEKEQNPDEKNKSEKKRHNRKKED.

2 residues coordinate Mg(2+): aspartate 488 and aspartate 494. Positions 555–614 constitute a KH domain; the sequence is PRIEMMTIPVEKIREVIGSGGKVIREIVEQTGAKINIEDDGTIKIASPDTKSIETAKSWI. One can recognise an S1 motif domain in the interval 624 to 692; it reads GTIYQGTVVK…ERGKIRLSMK (69 aa). The interval 698-733 is disordered; it reads TGKEIPQDDLIKTEKEQNPDEKNKSEKKRHNRKKED. Positions 702-721 are enriched in basic and acidic residues; it reads IPQDDLIKTEKEQNPDEKNK. Positions 722-733 are enriched in basic residues; sequence SEKKRHNRKKED.

Belongs to the polyribonucleotide nucleotidyltransferase family. It depends on Mg(2+) as a cofactor.

Its subcellular location is the cytoplasm. The enzyme catalyses RNA(n+1) + phosphate = RNA(n) + a ribonucleoside 5'-diphosphate. Functionally, involved in mRNA degradation. Catalyzes the phosphorolysis of single-stranded polyribonucleotides processively in the 3'- to 5'-direction. This Bartonella bacilliformis (strain ATCC 35685 / KC583 / Herrer 020/F12,63) protein is Polyribonucleotide nucleotidyltransferase.